We begin with the raw amino-acid sequence, 782 residues long: Protein bicaudal D (782 aa).

Residues 15-77 (VQDLQMEVER…RHELDITQEA (63 aa)) adopt a coiled-coil conformation. Serine 103 is subject to Phosphoserine. Positions 107–249 (ETSLNLQIFD…LETLQGEREA (143 aa)) form a coiled coil. Serine 285, serine 288, and serine 305 each carry phosphoserine. Threonine 306 carries the phosphothreonine modification. Position 310 is a phosphoserine (serine 310). 2 coiled-coil regions span residues 320 to 368 (SEIH…FMSR) and 444 to 477 (TTTLRNEVTNLKNKLLATEQKSLDLQSDVQTLTH). Position 528 is a phosphoserine (serine 528). Coiled-coil stretches lie at residues 603 to 630 (EKVNTEEMEELQEQIVKLKSLLSVKREQ) and 695 to 743 (CEEY…MEMD). Positions 699-722 (VTQVDDLNRQLEAAEEEKKTLNQL) are interaction with Rab6. A disordered region spans residues 744–782 (REMRHVRRPMPAQRGTSGKSSFSTRPSSRNPASSNANPF). Over residues 757 to 767 (RGTSGKSSFST) the composition is skewed to polar residues. Residues 768-782 (RPSSRNPASSNANPF) show a composition bias toward low complexity.

It belongs to the BicD family. In terms of assembly, may homodimerize but does not interact with BicDR. Interacts (via C-terminal domain) with Rab6. In terms of tissue distribution, in ovaries, expressed in oocyte and nurse cells.

Its subcellular location is the cytoplasm. It is found in the cytoskeleton. Its function is as follows. This protein is essential for differentiation. It may play a role in localizing of Nanos (a maternal determinant) activity in oocytes. Functions redundantly with BicDR. During oogenesis, plays a specific role, together with Rab6 but independently of Sec5, in the polarization of the oocyte microtubule cytoskeleton, in oskar mRNA localization and in the anterodorsal secretion of grk. Plays a role in the biogenesis of annulate lamellae containing nuclear pore complex components. During macrochaetae development, together with BicDR, involved in Rab 6 and Spn-F stability and distribution and actin cytoskeleton organization. The sequence is that of Protein bicaudal D from Drosophila melanogaster (Fruit fly).